A 1231-amino-acid polypeptide reads, in one-letter code: Multifunctional 2-oxoglutarate metabolism enzyme (1231 aa).

Positions 1–41 (MANISSPFGQNEWLVEEMYRKFRDDPSSVDPSWHEFLVDYS) are 2-oxoglutarate dehydrogenase E1, N-terminal part. The interval 38–79 (VDYSPEPTSQPAAEPTRVTSPLVAERAAAAAPQAPPKPADTA) is disordered. The linker stretch occupies residues 42–88 (PEPTSQPAAEPTRVTSPLVAERAAAAAPQAPPKPADTAAAGNGVVAA). The span at 58 to 69 (PLVAERAAAAAP) shows a compositional bias: low complexity. The tract at residues 89–337 (LAAKTAVPPP…LRTIHELLLS (249 aa)) is succinyltransferase E2. Residue His-316 is the Proton acceptor; for succinyltransferase activity of the active site. Positions 338-1231 (DGFWDEVFRE…QQEILDEAFG (894 aa)) are 2-oxoglutarate dehydrogenase E1, C-terminal part. Residue Arg-542 coordinates thiamine diphosphate. 2-oxoglutarate is bound by residues His-581 and Ser-606. Positions 606, 608, 649, 650, 651, and 682 each coordinate thiamine diphosphate. Asp-649 is a binding site for Mg(2+). Residues Asn-682 and Ile-684 each coordinate Mg(2+). Residues 787 to 817 (DISMKEAEDALRDYQGQLERVFNEVRELEKH) are a coiled coil. His-1024 contacts 2-oxoglutarate. 7 residues coordinate acetyl-CoA: Thr-1042, Arg-1058, Lys-1093, Ser-1096, Gln-1146, Arg-1153, and Arg-1154.

This sequence belongs to the 2-oxoacid dehydrogenase family. Kgd subfamily. As to quaternary structure, homodimer. The 2-oxoglutarate dehydrogenase (ODH) complex contains multiple copies of three enzymatic components: 2-oxoglutarate dehydrogenase (E1), dihydrolipoamide succinyltransferase (E2) and lipoamide dehydrogenase (E3). Mg(2+) is required as a cofactor. Requires thiamine diphosphate as cofactor.

It carries out the reaction glyoxylate + 2-oxoglutarate + H(+) = 2-hydroxy-3-oxoadipate + CO2. The catalysed reaction is 2-oxoglutarate + H(+) = succinate semialdehyde + CO2. The enzyme catalyses N(6)-[(R)-lipoyl]-L-lysyl-[protein] + 2-oxoglutarate + H(+) = N(6)-[(R)-S(8)-succinyldihydrolipoyl]-L-lysyl-[protein] + CO2. It catalyses the reaction N(6)-[(R)-dihydrolipoyl]-L-lysyl-[protein] + succinyl-CoA = N(6)-[(R)-S(8)-succinyldihydrolipoyl]-L-lysyl-[protein] + CoA. It participates in carbohydrate metabolism; tricarboxylic acid cycle; succinate from 2-oxoglutarate (transferase route): step 1/2. It functions in the pathway carbohydrate metabolism; tricarboxylic acid cycle; succinyl-CoA from 2-oxoglutarate (dehydrogenase route): step 1/1. Alpha-ketoglutarate dehydrogenase and decarboxylase activities are inhibited by unphosphorylated GarA, and allosterically activated by acetyl-CoA, the main substrate of the TCA cycle. Functionally, shows three enzymatic activities that share a first common step, the attack of thiamine-PP on 2-oxoglutarate (alpha-ketoglutarate, KG), leading to the formation of an enamine-thiamine-PP intermediate upon decarboxylation. Thus, displays KGD activity, catalyzing the decarboxylation from five-carbon 2-oxoglutarate to four-carbon succinate semialdehyde (SSA). Also catalyzes C-C bond formation between the activated aldehyde formed after decarboxylation of alpha-ketoglutarate and the carbonyl of glyoxylate (GLX), to yield 2-hydroxy-3-oxoadipate (HOA), which spontaneously decarboxylates to form 5-hydroxylevulinate (HLA). And is also a component of the 2-oxoglutarate dehydrogenase (ODH) complex, that catalyzes the overall conversion of 2-oxoglutarate to succinyl-CoA and CO(2). The KG decarboxylase and KG dehydrogenase reactions provide two alternative, tightly regulated, pathways connecting the oxidative and reductive branches of the TCA cycle. This is Multifunctional 2-oxoglutarate metabolism enzyme (kgd) from Mycobacterium tuberculosis (strain ATCC 25177 / H37Ra).